Consider the following 807-residue polypeptide: Dual specificity protein phosphatase PPS1 (807 aa).

The Tyrosine-protein phosphatase domain occupies Leu585–Asn783. Positions Leu593–Thr807 are catalytic. Cys725 functions as the Phosphocysteine intermediate in the catalytic mechanism.

It belongs to the protein-tyrosine phosphatase family. Non-receptor class dual specificity subfamily.

It catalyses the reaction O-phospho-L-tyrosyl-[protein] + H2O = L-tyrosyl-[protein] + phosphate. The catalysed reaction is O-phospho-L-seryl-[protein] + H2O = L-seryl-[protein] + phosphate. It carries out the reaction O-phospho-L-threonyl-[protein] + H2O = L-threonyl-[protein] + phosphate. Protein phosphatase with specificity for serine, threonine, and tyrosine residues; has a role in the DNA synthesis phase of the cell cycle. The sequence is that of Dual specificity protein phosphatase PPS1 (PPS1) from Saccharomyces cerevisiae (strain ATCC 204508 / S288c) (Baker's yeast).